The following is a 484-amino-acid chain: Antibiotic efflux pump outer membrane protein ArpC (484 aa).

An N-terminal signal peptide occupies residues 1–17 (MTKSLLSLAVTAFILGG). Cys-18 is lipidated: N-palmitoyl cysteine. Cys-18 carries the S-diacylglycerol cysteine lipid modification.

Belongs to the outer membrane factor (OMF) (TC 1.B.17) family.

It is found in the cell outer membrane. In terms of biological role, the outer membrane component of an antibiotic efflux pump. Confers resistance to numerous structurally unrelated antibiotics such as carbenicillin, chloramphenicol, erythromycin, novobiocin, streptomycin and tetracycline. Is not involved in organic solvent efflux. This chain is Antibiotic efflux pump outer membrane protein ArpC (arpC), found in Pseudomonas putida (Arthrobacter siderocapsulatus).